We begin with the raw amino-acid sequence, 544 residues long: Tyrosine-protein kinase fynb (544 aa).

A lipid anchor (N-myristoyl glycine) is attached at glycine 2. Residues cysteine 3 and cysteine 6 are each lipidated (S-palmitoyl cysteine). Residues 89–150 (TGVTLFVALY…PSNYVAPVDS (62 aa)) enclose the SH3 domain. One can recognise an SH2 domain in the interval 156 to 253 (WYFGKLGRKD…GLCCRLVVPC (98 aa)). Positions 278–531 (LQLIKRLGNG…YLQAFLEDYF (254 aa)) constitute a Protein kinase domain. Residues 284-292 (LGNGQFGEV) and lysine 306 each bind ATP. Catalysis depends on aspartate 397, which acts as the Proton acceptor. Tyrosine 427 carries the post-translational modification Phosphotyrosine; by autocatalysis. Tyrosine 538 carries the post-translational modification Phosphotyrosine.

Belongs to the protein kinase superfamily. Tyr protein kinase family. SRC subfamily. Requires Mn(2+) as cofactor.

It localises to the cytoplasm. It carries out the reaction L-tyrosyl-[protein] + ATP = O-phospho-L-tyrosyl-[protein] + ADP + H(+). Inhibited by phosphorylation of Tyr-538 by leukocyte common antigen and activated by dephosphorylation of this site. Tyrosine-protein kinase implicated in the control of cell growth. Plays a role in the regulation of intracellular calcium levels. Required in brain development and mature brain function with important roles in the regulation of axon growth, axon guidance, and neurite extension. Role in CNTN1-mediated signaling. The chain is Tyrosine-protein kinase fynb (fynb) from Danio rerio (Zebrafish).